Here is a 274-residue protein sequence, read N- to C-terminus: Cytochrome b-c1 complex subunit Rieske, mitochondrial (274 aa).

The Mitochondrial matrix portion of the chain corresponds to 79 to 103 (SHTDIKVPDFSDYRRAEVLDSTKSS). The helical transmembrane segment at 104 to 140 (KESSEARKGFSYLVTATTTVGVAYAAKNAVSQFVSSM) threads the bilayer. Over 141–274 (SASADVLAMS…FTSGDVVVVG (134 aa)) the chain is Mitochondrial intermembrane. The Rieske domain maps to 187-272 (EAAVEVSQLR…YEFTSGDVVV (86 aa)). Residues cysteine 217, histidine 219, cysteine 236, histidine 239, and serine 241 each coordinate [2Fe-2S] cluster. The cysteines at positions 222 and 238 are disulfide-linked.

It belongs to the Rieske iron-sulfur protein family. As to quaternary structure, component of the ubiquinol-cytochrome c oxidoreductase (cytochrome b-c1 complex, complex III, CIII), a multisubunit enzyme composed of 11 subunits. The complex is composed of 3 respiratory subunits cytochrome b, cytochrome c1 and Rieske protein UQCRFS1, 2 core protein subunits UQCRC1/QCR1 and UQCRC2/QCR2, and 6 low-molecular weight protein subunits UQCRH/QCR6, UQCRB/QCR7, UQCRQ/QCR8, UQCR10/QCR9, UQCR11/QCR10 and subunit 9, the cleavage product of Rieske protein UQCRFS1. The complex exists as an obligatory dimer and forms supercomplexes (SCs) in the inner mitochondrial membrane with NADH-ubiquinone oxidoreductase (complex I, CI) and cytochrome c oxidase (complex IV, CIV), resulting in different assemblies (supercomplex SCI(1)III(2)IV(1) and megacomplex MCI(2)III(2)IV(2)). Incorporation of the Rieske protein UQCRFS1 is the penultimate step in complex III assembly. Interacts with TTC19, which is involved in the clearance of UQCRFS1 fragments. Component of the ubiquinol-cytochrome c oxidoreductase (cytochrome b-c1 complex, complex III, CIII). Subunit 9 corresponds to the mitochondrial targeting sequence (MTS) of Rieske protein UQCRFS1. It is retained after processing and incorporated inside complex III, where it remains bound to the complex and localizes between the 2 core subunits UQCRC1/QCR1 and UQCRC2/QCR2. It depends on [2Fe-2S] cluster as a cofactor. Proteolytic processing is necessary for the correct insertion of UQCRFS1 in the complex III dimer. Several fragments are generated during UQCRFS1 insertion, most probably due to the endogenous matrix-processing peptidase (MPP) activity of the 2 core protein subunits UQCRC1/QCR1 and UQCRC2/QCR2, which are homologous to the 2 mitochondrial-processing peptidase (MPP) subunits beta-MPP and alpha-MPP respectively. The action of the protease is also necessary for the clearance of the UQCRFS1 fragments.

It is found in the mitochondrion inner membrane. The enzyme catalyses a quinol + 2 Fe(III)-[cytochrome c](out) = a quinone + 2 Fe(II)-[cytochrome c](out) + 2 H(+)(out). Component of the ubiquinol-cytochrome c oxidoreductase, a multisubunit transmembrane complex that is part of the mitochondrial electron transport chain which drives oxidative phosphorylation. The respiratory chain contains 3 multisubunit complexes succinate dehydrogenase (complex II, CII), ubiquinol-cytochrome c oxidoreductase (cytochrome b-c1 complex, complex III, CIII) and cytochrome c oxidase (complex IV, CIV), that cooperate to transfer electrons derived from NADH and succinate to molecular oxygen, creating an electrochemical gradient over the inner membrane that drives transmembrane transport and the ATP synthase. The cytochrome b-c1 complex catalyzes electron transfer from ubiquinol to cytochrome c, linking this redox reaction to translocation of protons across the mitochondrial inner membrane, with protons being carried across the membrane as hydrogens on the quinol. In the process called Q cycle, 2 protons are consumed from the matrix, 4 protons are released into the intermembrane space and 2 electrons are passed to cytochrome c. The Rieske protein is a catalytic core subunit containing a [2Fe-2S] iron-sulfur cluster. It cycles between 2 conformational states during catalysis to transfer electrons from the quinol bound in the Q(0) site in cytochrome b to cytochrome c1. Incorporation of UQCRFS1 is the penultimate step in complex III assembly. In terms of biological role, component of the ubiquinol-cytochrome c oxidoreductase (cytochrome b-c1 complex, complex III, CIII). UQCRFS1 undergoes proteolytic processing once it is incorporated in the complex III dimer. One of the fragments, called subunit 9, corresponds to its mitochondrial targeting sequence (MTS). The proteolytic processing is necessary for the correct insertion of UQCRFS1 in the complex III dimer, but the persistence of UQCRFS1-derived fragments may prevent newly imported UQCRFS1 to be processed and assembled into complex III and is detrimental for the complex III structure and function. In Rattus norvegicus (Rat), this protein is Cytochrome b-c1 complex subunit Rieske, mitochondrial (Uqcrfs1).